A 94-amino-acid polypeptide reads, in one-letter code: Co-chaperonin GroES (94 aa).

The protein belongs to the GroES chaperonin family. As to quaternary structure, heptamer of 7 subunits arranged in a ring. Interacts with the chaperonin GroEL.

It localises to the cytoplasm. In terms of biological role, together with the chaperonin GroEL, plays an essential role in assisting protein folding. The GroEL-GroES system forms a nano-cage that allows encapsulation of the non-native substrate proteins and provides a physical environment optimized to promote and accelerate protein folding. GroES binds to the apical surface of the GroEL ring, thereby capping the opening of the GroEL channel. The chain is Co-chaperonin GroES from Ligilactobacillus salivarius (strain UCC118) (Lactobacillus salivarius).